A 416-amino-acid polypeptide reads, in one-letter code: Enolase (416 aa).

(2R)-2-phosphoglycerate is bound at residue glutamine 160. The active-site Proton donor is the glutamate 204. Aspartate 239, glutamate 280, and aspartate 306 together coordinate Mg(2+). Residues lysine 331, arginine 360, serine 361, and lysine 382 each coordinate (2R)-2-phosphoglycerate. Lysine 331 functions as the Proton acceptor in the catalytic mechanism.

This sequence belongs to the enolase family. It depends on Mg(2+) as a cofactor.

It localises to the cytoplasm. The protein localises to the secreted. It is found in the cell surface. It catalyses the reaction (2R)-2-phosphoglycerate = phosphoenolpyruvate + H2O. It participates in carbohydrate degradation; glycolysis; pyruvate from D-glyceraldehyde 3-phosphate: step 4/5. Its function is as follows. Catalyzes the reversible conversion of 2-phosphoglycerate (2-PG) into phosphoenolpyruvate (PEP). It is essential for the degradation of carbohydrates via glycolysis. The chain is Enolase from Sulfurisphaera tokodaii (strain DSM 16993 / JCM 10545 / NBRC 100140 / 7) (Sulfolobus tokodaii).